Consider the following 291-residue polypeptide: Lipoyl synthase (291 aa).

C35, C40, C46, C61, C65, C68, and S273 together coordinate [4Fe-4S] cluster. The Radical SAM core domain occupies 47–262; the sequence is FGKRQATFLI…KERALTMGFE (216 aa).

It belongs to the radical SAM superfamily. Lipoyl synthase family. [4Fe-4S] cluster serves as cofactor.

Its subcellular location is the cytoplasm. It carries out the reaction [[Fe-S] cluster scaffold protein carrying a second [4Fe-4S](2+) cluster] + N(6)-octanoyl-L-lysyl-[protein] + 2 oxidized [2Fe-2S]-[ferredoxin] + 2 S-adenosyl-L-methionine + 4 H(+) = [[Fe-S] cluster scaffold protein] + N(6)-[(R)-dihydrolipoyl]-L-lysyl-[protein] + 4 Fe(3+) + 2 hydrogen sulfide + 2 5'-deoxyadenosine + 2 L-methionine + 2 reduced [2Fe-2S]-[ferredoxin]. It participates in protein modification; protein lipoylation via endogenous pathway; protein N(6)-(lipoyl)lysine from octanoyl-[acyl-carrier-protein]: step 2/2. Catalyzes the radical-mediated insertion of two sulfur atoms into the C-6 and C-8 positions of the octanoyl moiety bound to the lipoyl domains of lipoate-dependent enzymes, thereby converting the octanoylated domains into lipoylated derivatives. This is Lipoyl synthase from Citrifermentans bemidjiense (strain ATCC BAA-1014 / DSM 16622 / JCM 12645 / Bem) (Geobacter bemidjiensis).